Consider the following 757-residue polypeptide: Double zinc ribbon and ankyrin repeat-containing protein 1 (757 aa).

DZANK-type zinc fingers lie at residues C230–E290 and C359–G407. 2 ANK repeats span residues E631–C662 and Q666–Q695.

Interacts with NINL. Associates with DYNC1H1 and multiple dynein intermediate and light chains as well as actin-binding proteins. In terms of tissue distribution, expressed in retina.

The protein resides in the cell projection. Its subcellular location is the cilium. Its function is as follows. Involved in vesicle transport in photoreceptor cells. The polypeptide is Double zinc ribbon and ankyrin repeat-containing protein 1 (Rattus norvegicus (Rat)).